The primary structure comprises 378 residues: 3-dehydroquinate synthase (378 aa).

NAD(+)-binding positions include 115-119, 139-140, K152, and K161; these read GVVGD and TS. Zn(2+)-binding residues include E194, H256, and H275.

It belongs to the sugar phosphate cyclases superfamily. Dehydroquinate synthase family. It depends on Co(2+) as a cofactor. The cofactor is Zn(2+). NAD(+) serves as cofactor.

The protein resides in the cytoplasm. It catalyses the reaction 7-phospho-2-dehydro-3-deoxy-D-arabino-heptonate = 3-dehydroquinate + phosphate. It functions in the pathway metabolic intermediate biosynthesis; chorismate biosynthesis; chorismate from D-erythrose 4-phosphate and phosphoenolpyruvate: step 2/7. In terms of biological role, catalyzes the conversion of 3-deoxy-D-arabino-heptulosonate 7-phosphate (DAHP) to dehydroquinate (DHQ). The polypeptide is 3-dehydroquinate synthase (Brucella anthropi (strain ATCC 49188 / DSM 6882 / CCUG 24695 / JCM 21032 / LMG 3331 / NBRC 15819 / NCTC 12168 / Alc 37) (Ochrobactrum anthropi)).